We begin with the raw amino-acid sequence, 502 residues long: N-sulphoglucosamine sulphohydrolase (502 aa).

Positions Met-1–Ala-20 are cleaved as a signal peptide. Asp-31 and Asp-32 together coordinate Ca(2+). Asn-41 is a glycosylation site (N-linked (GlcNAc...) asparagine). Cys-70 is a Ca(2+) binding site. Cys-70 serves as the catalytic Nucleophile. At Cys-70 the chain carries 3-oxoalanine (Cys). N-linked (GlcNAc...) asparagine glycans are attached at residues Asn-142 and Asn-151. A disulfide bridge links Cys-183 with Cys-194. A glycan (N-linked (GlcNAc...) asparagine) is linked at Asn-264. Ca(2+)-binding residues include Asp-273 and Asn-274. N-linked (GlcNAc...) asparagine glycosylation is present at Asn-413. An intrachain disulfide couples Cys-481 to Cys-495.

The protein belongs to the sulfatase family. The cofactor is Ca(2+). The conversion to 3-oxoalanine (also known as C-formylglycine, FGly), of a serine or cysteine residue in prokaryotes and of a cysteine residue in eukaryotes, is critical for catalytic activity.

It localises to the lysosome. It carries out the reaction N-sulfo-D-glucosamine + H2O = D-glucosamine + sulfate. In terms of biological role, catalyzes a step in lysosomal heparan sulfate degradation. The polypeptide is N-sulphoglucosamine sulphohydrolase (SGSH) (Homo sapiens (Human)).